The following is a 565-amino-acid chain: Deformed epidermal autoregulatory factor 1 homolog (565 aa).

2 disordered regions span residues 29-62 (AAAA…ETRR) and 162-189 (GLKG…EKGG). Pro residues predominate over residues 169 to 181 (PLTPGPQSPPTPL). Thr171 is modified (phosphothreonine). At Ser176 the chain carries Phosphoserine. Thr179 carries the phosphothreonine modification. In terms of domain architecture, SAND spans 193–273 (NWDPSVYDSE…QCLIQDGILN (81 aa)). A Nuclear localization signal motif is present at residues 301 to 316 (KRRKKENELPTTPVKK). Residues 403 to 478 (IAPFPEAALP…QLKTLFEQAK (76 aa)) are interaction with LMO4. Thr432 carries the post-translational modification Phosphothreonine. A phosphoserine mark is found at Ser443 and Ser448. Cys504, Cys507, Cys515, Cys518, Cys524, Cys528, His536, and Cys540 together coordinate Zn(2+). The segment at 504–540 (CVNCGREAMSECTGCHKVNYCSTFCQRKDWKDHQHVC) adopts an MYND-type zinc-finger fold.

As to quaternary structure, homodimer. Interacts with LMO4; LMO4 blocks export from nucleus. Interacts with LMO2 and CLIM2. May interact with the corepressors NCOR1 and NCRO2. Identified in a complex with XRCC5 and XRCC6. Interacts (via the SAND domain) with the DNA-PK complex subunit XRCC6; the interaction is direct and may be inhibited by DNA-binding. May be phosphorylated by DNA-PK complex in a DNA independent manner (in vitro). In terms of tissue distribution, ubiquitous. Detected in brain, spleen, adrenal, lung, skeletal muscle, liver, kidney, and in developing germ cells in testis. In pituitary, restricted to hormone-secreting cell types.

It localises to the nucleus. It is found in the secreted. Its function is as follows. Transcription factor that binds to sequence with multiple copies of 5'-TTC[CG]G-3' present in its own promoter and that of the HNRPA2B1 gene. Down-regulates transcription of these genes. Binds to the retinoic acid response element (RARE) 5'-AGGGTTCACCGAAAGTTCA-3'. Activates the proenkephalin gene independently of promoter binding, probably through protein-protein interaction. When secreted, behaves as an inhibitor of cell proliferation, by arresting cells in the G0 or G1 phase. Regulates epithelial cell proliferation and side-branching in the mammary gland. Required for neural tube closure and skeletal patterning. Controls the expression of peripheral tissue antigens in pancreatic lymph nodes. Transcriptional activator of EIF4G3. May also involved in behavior. The chain is Deformed epidermal autoregulatory factor 1 homolog (Deaf1) from Rattus norvegicus (Rat).